The sequence spans 291 residues: Ribosomal RNA small subunit methyltransferase H (291 aa).

S-adenosyl-L-methionine is bound by residues 36-38 (GGH), Asp-55, Leu-88, Asp-102, and Gln-109. A disordered region spans residues 268 to 291 (KPTQEETKNNPRARSAKLRVAERI).

Belongs to the methyltransferase superfamily. RsmH family.

Its subcellular location is the cytoplasm. The catalysed reaction is cytidine(1402) in 16S rRNA + S-adenosyl-L-methionine = N(4)-methylcytidine(1402) in 16S rRNA + S-adenosyl-L-homocysteine + H(+). Functionally, specifically methylates the N4 position of cytidine in position 1402 (C1402) of 16S rRNA. The protein is Ribosomal RNA small subunit methyltransferase H of Thermosipho melanesiensis (strain DSM 12029 / CIP 104789 / BI429).